The chain runs to 275 residues: NH(3)-dependent NAD(+) synthetase (275 aa).

Residue Gly-46–Ser-53 coordinates ATP. Asp-52 lines the Mg(2+) pocket. Arg-140 contributes to the deamido-NAD(+) binding site. Thr-160 lines the ATP pocket. Glu-165 contacts Mg(2+). Residues Lys-173 and Asp-180 each coordinate deamido-NAD(+). Positions 189 and 211 each coordinate ATP. His-260–Lys-261 lines the deamido-NAD(+) pocket.

It belongs to the NAD synthetase family. As to quaternary structure, homodimer.

The enzyme catalyses deamido-NAD(+) + NH4(+) + ATP = AMP + diphosphate + NAD(+) + H(+). The protein operates within cofactor biosynthesis; NAD(+) biosynthesis; NAD(+) from deamido-NAD(+) (ammonia route): step 1/1. In terms of biological role, catalyzes the ATP-dependent amidation of deamido-NAD to form NAD. Uses ammonia as a nitrogen source. This Salmonella typhi protein is NH(3)-dependent NAD(+) synthetase.